We begin with the raw amino-acid sequence, 897 residues long: Leucine--tRNA ligase (897 aa).

The short motif at 42-52 (PYPSGKLHMGH) is the 'HIGH' region element. The 'KMSKS' region signature appears at 645–649 (TMSKS). Lysine 648 contributes to the ATP binding site.

Belongs to the class-I aminoacyl-tRNA synthetase family.

The protein resides in the cytoplasm. It catalyses the reaction tRNA(Leu) + L-leucine + ATP = L-leucyl-tRNA(Leu) + AMP + diphosphate. This chain is Leucine--tRNA ligase, found in Paracidovorax citrulli (strain AAC00-1) (Acidovorax citrulli).